The primary structure comprises 304 residues: MKIGILSRNSKLYSTSRLVEAARERGHEPRVVDVLKCYMNITTNAPTVRYRSSGVSEELQFDAVIPRIGASVTTYGCAVLRQFEVSGVYSINESIAITRSRDKLRAHQLLARKGVGQPVTSYAHSADATNDLIESVNGAPLIVKVMASTHGNGVVLAETDKAAETLINAFRGLKADFLVQEFIKEAGGSDIRCFVIGDKVVAAMQRTAQPGEFRSNLHRGGSAQVVKLRPNERRLAVQAAQVMGLDLAGVDIIRSSHGPLVLEVNSSPGLKGIESATNKDIAGAIIDYIVKDVLNGPNKPKGKG.

Residues 107–290 (HQLLARKGVG…IAGAIIDYIV (184 aa)) form the ATP-grasp domain. ATP contacts are provided by residues lysine 144, 181–182 (EF), aspartate 190, and 214–216 (RSN). Mg(2+)-binding residues include aspartate 251, glutamate 263, and asparagine 265. Aspartate 251, glutamate 263, and asparagine 265 together coordinate Mn(2+).

The protein belongs to the RimK family. The cofactor is Mg(2+). Mn(2+) is required as a cofactor.

This is Probable alpha-L-glutamate ligase 2 from Hahella chejuensis (strain KCTC 2396).